A 792-amino-acid polypeptide reads, in one-letter code: Ribonucleoside-diphosphate reductase large subunit (792 aa).

Residues threonine 200, 215-216, glycine 246, 415-419, and 606-610 contribute to the substrate site; these read SC, NLCAE, and PTAGT. Cysteine 216 and cysteine 431 are joined by a disulfide. Asparagine 415 functions as the Proton acceptor in the catalytic mechanism. The active-site Cysteine radical intermediate is the cysteine 417. The active-site Proton acceptor is the glutamate 419. Residues 758–781 form a disordered region; it reads SPPHSGMKQDGAWLPGPKNPEEES.

The protein belongs to the ribonucleoside diphosphate reductase large chain family. In terms of assembly, heterotetramer composed of a homodimer of the large subunit (R1) and a homodimer of the small subunit (R2). Larger multisubunit protein complex are also active, composed of (R1)n(R2)n.

The enzyme catalyses a 2'-deoxyribonucleoside 5'-diphosphate + [thioredoxin]-disulfide + H2O = a ribonucleoside 5'-diphosphate + [thioredoxin]-dithiol. In terms of biological role, ribonucleoside-diphosphate reductase holoenzyme provides the precursors necessary for viral DNA synthesis. Allows virus growth in non-dividing cells, as well as reactivation from latency in infected hosts. Catalyzes the biosynthesis of deoxyribonucleotides from the corresponding ribonucleotides. The polypeptide is Ribonucleoside-diphosphate reductase large subunit (Human herpesvirus 8 type P (isolate GK18) (HHV-8)).